We begin with the raw amino-acid sequence, 673 residues long: Mechanosensitive ion channel protein 2, chloroplastic (673 aa).

Residues 1 to 75 constitute a chloroplast transit peptide; sequence MALYGTLQLS…SVPCRTTAFR (75 aa). Transmembrane regions (helical) follow at residues 107-127, 152-172, 193-213, 240-260, and 264-284; these read FPFV…LWGL, YHVM…LFIC, LNFV…SSLI, ALYS…LGFS, and WLTA…EILT. The tract at residues 492 to 673 is disordered; the sequence is KINGEDKSKS…QPNSGASTEP (182 aa). Basic and acidic residues-rich tracts occupy residues 510–525, 564–576, and 617–642; these read AEQE…KETS, TPKD…TEKP, and GSKR…ELTG. Ser571 bears the Phosphoserine mark. A compositionally biased stretch (polar residues) spans 661 to 673; it reads SQSQPNSGASTEP.

This sequence belongs to the MscS (TC 1.A.23) family. Widely expressed.

The protein localises to the plastid. It localises to the chloroplast membrane. Functionally, mechanosensitive channel that opens in response to stretch forces in the membrane lipid bilayer. Controls plastid size, shape, and perhaps division during normal plant development by altering ion flux in response to changes in membrane tension. Acts as a component of the chloroplast division machinery. This is Mechanosensitive ion channel protein 2, chloroplastic (MSL2) from Arabidopsis thaliana (Mouse-ear cress).